Consider the following 322-residue polypeptide: Probable heme-iron transport system permease protein IsdF (322 aa).

9 consecutive transmembrane segments (helical) span residues 9 to 29, 61 to 81, 89 to 109, 114 to 134, 143 to 163, 179 to 199, 233 to 253, 267 to 287, and 294 to 314; these read LLFL…FVTG, ILIA…LQAA, ANII…MLFI, FYLP…IIVL, VSMI…LEIL, IWSD…LTLL, VFLA…GIIV, VLIP…DLLG, and LEIP…IYLI.

It belongs to the binding-protein-dependent transport system permease family. FecCD subfamily.

It localises to the cell membrane. In terms of biological role, part of the binding-protein-dependent transport system for heme-iron. Responsible for the translocation of the substrate across the membrane. This is Probable heme-iron transport system permease protein IsdF (isdF) from Staphylococcus aureus (strain bovine RF122 / ET3-1).